The primary structure comprises 81 residues: uncharacterized protein (81 aa).

It to M.thermoautotrophicum MTH886.

This is an uncharacterized protein from Methanocaldococcus jannaschii (strain ATCC 43067 / DSM 2661 / JAL-1 / JCM 10045 / NBRC 100440) (Methanococcus jannaschii).